Here is a 407-residue protein sequence, read N- to C-terminus: Eukaryotic initiation factor 4A-II (407 aa).

The segment at 1–22 is disordered; that stretch reads MSGGSADYNREHGGPEGMDPDG. The short motif at 33-61 is the Q motif element; that stretch reads DNFDDMNLKESLLRGIYAYGFEKPSAIQQ. The 172-residue stretch at 64–235 folds into the Helicase ATP-binding domain; the sequence is IIPCIKGYDV…KKFMRDPIRI (172 aa). Residue 77-84 participates in ATP binding; the sequence is AQSGTGKT. T159 is subject to Phosphothreonine. A DEAD box motif is present at residues 183-186; the sequence is DEAD. The Helicase C-terminal domain occupies 246-407; it reads GIKQFYINVE…EMPMNVADLI (162 aa).

It belongs to the DEAD box helicase family. eIF4A subfamily. EIF4F is a multi-subunit complex, the composition of which varies with external and internal environmental conditions. It is composed of at least EIF4A, EIF4E and EIF4G1/EIFFG3. Interacts with EIF4E. May interact with NOM1.

It catalyses the reaction ATP + H2O = ADP + phosphate + H(+). In terms of biological role, ATP-dependent RNA helicase which is a subunit of the eIF4F complex involved in cap recognition and is required for mRNA binding to ribosome. In the current model of translation initiation, eIF4A unwinds RNA secondary structures in the 5'-UTR of mRNAs which is necessary to allow efficient binding of the small ribosomal subunit, and subsequent scanning for the initiator codon. The protein is Eukaryotic initiation factor 4A-II (EIF4A2) of Bos taurus (Bovine).